A 297-amino-acid chain; its full sequence is NADPH-dependent 1-acyldihydroxyacetone phosphate reductase (297 aa).

Residues 16–20 (GASGG) carry the GXSXG motif. Residue Ser-18 is the Nucleophile; for lipase activity of the active site. NADP(+) is bound by residues Ile-21, Asp-64, Asn-93, Arg-126, Tyr-157, Lys-161, Val-190, and Thr-192. Residue Tyr-157 is the Proton acceptor of the active site. Lys-161 (lowers pKa of active site Tyr) is an active-site residue.

It belongs to the short-chain dehydrogenases/reductases (SDR) family.

Its subcellular location is the lipid droplet. The protein resides in the mitochondrion outer membrane. The protein localises to the endoplasmic reticulum. The catalysed reaction is a 1-acylglycerone 3-phosphate + NADPH + H(+) = a 1-acyl-sn-glycero-3-phosphate + NADP(+). It catalyses the reaction 1-hexadecanoyl-sn-glycero-3-phosphate + NADP(+) = 1-hexadecanoylglycerone 3-phosphate + NADPH + H(+). The enzyme catalyses a triacylglycerol + H2O = a diacylglycerol + a fatty acid + H(+). It carries out the reaction 1,2,3-tri-(9Z-octadecenoyl)-glycerol + H2O = di-(9Z)-octadecenoylglycerol + (9Z)-octadecenoate + H(+). Its activity is regulated as follows. Inhibited by divalent cations and N-ethylmaleimide. Activity is reduced under anaerobic growth conditions. Its function is as follows. Can convert acyl and alkyl dihydroxyacetone-phosphate (DHAP) into glycerolipids and ether lipids, respectively. Required for the biosynthesis of phosphatidic acid via the DHAP pathway, where it reduces 1-acyl DHAP to lysophosphatidic acid (LPA). Also has triacylglycerol (TAG) lipase activity. Involved in the mobilization of the non-polar storage lipids triacylglycerols (TAGs) from lipid particles by hydrolysis of TAGs. Required for spore germination. Plays a role in cell wall biogenesis, but this effect may be indirect by affecting the activities of cell wall synthesis enzymes. Lipolysis of TAG by AYR1 is essential for starvation-induced autophagy. Forms an NADPH-regulated cation-selective channel in the mitochondrial outer membrane. This is NADPH-dependent 1-acyldihydroxyacetone phosphate reductase from Saccharomyces cerevisiae (strain ATCC 204508 / S288c) (Baker's yeast).